A 510-amino-acid polypeptide reads, in one-letter code: MKTTILLMFLWGLSCALPVARYQNTESKSSEEWKGHLAQTPTPPLESSESSEESKLSSEEQANEDPSDSTESEEVLGLDDQQHVHRPAGGLSRRGGSEGDNKDDDEDESGDDTFGDDDGGPGPEERRSGGDSRLGSDEDSADTTRSREDSTPQGDEGARDTTSESRDLDREDEGNSRPEGGDSTPDSDSEEHWVGGGSEGDSSHGDGSEFDDEGMQSDDPGAYRSERGNSRISDAGLKSTQSKGDDEEQASTQDSHESPAAAYPRRKFFRKSRLPEEDGRGELDDSRTIEVMSDSTENPDSKEAGLGQSREHSKSESRQESEENRSPEDSQDVQDPSSESSQEVDLPSQENSSESQEEALHESRGDNPDNATSHSREHQADSESSEEDVLDKPSDSESTSTEEQADSESHESLRSSEESPESTEEQNSSSQEGAQTQSRSQESPSEEDDGSDSQDSSRSKEDSNSTESVSSSEEEAQTKNTEVESRKLTVDAYHNKPIGDQDDNDCQDGY.

A signal peptide spans 1-16 (MKTTILLMFLWGLSCA). Residues 23 to 510 (QNTESKSSEE…QDDNDCQDGY (488 aa)) form a disordered region. Composition is skewed to acidic residues over residues 61–77 (QANE…EVLG) and 101–119 (NKDD…DDDG). 3 stretches are compositionally biased toward basic and acidic residues: residues 123–180 (PEER…RPEG), 273–288 (RLPE…DSRT), and 299–328 (PDSK…RSPE). A compositionally biased stretch (polar residues) spans 333–343 (VQDPSSESSQE). Asparagine 351 carries N-linked (GlcNAc...) asparagine glycosylation. The span at 358–367 (EALHESRGDN) shows a compositional bias: basic and acidic residues. The Cell attachment site signature appears at 364-366 (RGD). N-linked (GlcNAc...) asparagine glycosylation is present at asparagine 370. The span at 407–417 (SESHESLRSSE) shows a compositional bias: basic and acidic residues. N-linked (GlcNAc...) asparagine glycosylation is found at asparagine 427 and asparagine 464. Residues 481–499 (TEVESRKLTVDAYHNKPIG) are compositionally biased toward basic and acidic residues. The segment covering 500–510 (DQDDNDCQDGY) has biased composition (acidic residues).

Interacts with importin alpha. Post-translationally, phosphorylated in the cytosol and extracellular matrix and unphosphorylated in the nucleus. Phosphorylation is necessary for nucleocytoplasmic transport and may be catalyzed by a nuclear isoform of CK2 and can be augmented by calcium. Phosphorylated (in vitro) by FAM20C in the extracellular medium at sites within the S-x-E/pS motif. In terms of tissue distribution, expressed in fetal brain, bone and tooth particularly in odontoblast, but not in ameloblast. Not expressed in liver and skin.

It is found in the nucleus. The protein localises to the cytoplasm. The protein resides in the secreted. It localises to the extracellular space. Its subcellular location is the extracellular matrix. May have a dual function during osteoblast differentiation. In the nucleus of undifferentiated osteoblasts, unphosphorylated form acts as a transcriptional component for activation of osteoblast-specific genes like osteocalcin. During the osteoblast to osteocyte transition phase it is phosphorylated and exported into the extracellular matrix, where it regulates nucleation of hydroxyapatite. In Bos taurus (Bovine), this protein is Dentin matrix acidic phosphoprotein 1 (DMP1).